We begin with the raw amino-acid sequence, 465 residues long: Phosphomethylpyrimidine synthase (465 aa).

Residues Asn-80, Met-109, Tyr-139, His-175, 195–197 (SRG), 236–239 (DSLR), and Glu-275 each bind substrate. Zn(2+) is bound at residue His-279. Residue Tyr-302 coordinates substrate. His-343 provides a ligand contact to Zn(2+). [4Fe-4S] cluster is bound by residues Cys-423, Cys-426, and Cys-431.

The protein belongs to the ThiC family. It depends on [4Fe-4S] cluster as a cofactor.

The enzyme catalyses 5-amino-1-(5-phospho-beta-D-ribosyl)imidazole + S-adenosyl-L-methionine = 4-amino-2-methyl-5-(phosphooxymethyl)pyrimidine + CO + 5'-deoxyadenosine + formate + L-methionine + 3 H(+). It participates in cofactor biosynthesis; thiamine diphosphate biosynthesis. Its function is as follows. Catalyzes the synthesis of the hydroxymethylpyrimidine phosphate (HMP-P) moiety of thiamine from aminoimidazole ribotide (AIR) in a radical S-adenosyl-L-methionine (SAM)-dependent reaction. The chain is Phosphomethylpyrimidine synthase from Synechococcus sp. (strain CC9311).